A 342-amino-acid polypeptide reads, in one-letter code: MAKIYYDDDADLSIIQNRQVAVIGYGSQGHAHALNLRDSGVDVRVGLRDGSSSIAKAEAQGLRVLSIEDACEEADLIMVLVPDQNQRQLYAEHIAPHLKDGDALFFAHGFNVHFGYIKAPQGVDVCMVAPKGPGHIVRREYSDGRGVPVLVCVEQDASGIAWDLTRSYAKALGGLRAGGIETSFREETETDLFGEQAVLCGGLSHLIQAGFETLVTAGYQPEMAYFEVCHEMKMIVDLIIEGGISKLRWSISDTAEYGDYVSGPRVIDDHVKKNMKAVLDDIQNGAFAKRFIADQDAGAPQSKKFREGEAKHPIEATGKELRKMYSWLAAADDDYTEGSVAR.

The 181-residue stretch at 2–182 folds into the KARI N-terminal Rossmann domain; sequence AKIYYDDDAD…GGLRAGGIET (181 aa). NADP(+) contacts are provided by residues 25–28, arginine 48, serine 51, serine 53, and 83–86; these read YGSQ and DQNQ. Histidine 108 is a catalytic residue. Glycine 134 contacts NADP(+). The 146-residue stretch at 183 to 328 folds into the KARI C-terminal knotted domain; the sequence is SFREETETDL…KELRKMYSWL (146 aa). 4 residues coordinate Mg(2+): aspartate 191, glutamate 195, glutamate 227, and glutamate 231. Serine 252 contributes to the substrate binding site.

The protein belongs to the ketol-acid reductoisomerase family. Requires Mg(2+) as cofactor.

The enzyme catalyses (2R)-2,3-dihydroxy-3-methylbutanoate + NADP(+) = (2S)-2-acetolactate + NADPH + H(+). The catalysed reaction is (2R,3R)-2,3-dihydroxy-3-methylpentanoate + NADP(+) = (S)-2-ethyl-2-hydroxy-3-oxobutanoate + NADPH + H(+). It participates in amino-acid biosynthesis; L-isoleucine biosynthesis; L-isoleucine from 2-oxobutanoate: step 2/4. Its pathway is amino-acid biosynthesis; L-valine biosynthesis; L-valine from pyruvate: step 2/4. In terms of biological role, involved in the biosynthesis of branched-chain amino acids (BCAA). Catalyzes an alkyl-migration followed by a ketol-acid reduction of (S)-2-acetolactate (S2AL) to yield (R)-2,3-dihydroxy-isovalerate. In the isomerase reaction, S2AL is rearranged via a Mg-dependent methyl migration to produce 3-hydroxy-3-methyl-2-ketobutyrate (HMKB). In the reductase reaction, this 2-ketoacid undergoes a metal-dependent reduction by NADPH to yield (R)-2,3-dihydroxy-isovalerate. The protein is Ketol-acid reductoisomerase (NADP(+)) of Cutibacterium acnes (strain DSM 16379 / KPA171202) (Propionibacterium acnes).